A 510-amino-acid chain; its full sequence is Secreted RxLR effector protein 24 (510 aa).

An N-terminal signal peptide occupies residues 1-18 (MRGAFYVAIALLGSHTAA). A RxLR-dEER motif is present at residues 47–68 (RVLRERRDSKDKLTVHAGAEER).

The protein belongs to the RxLR effector family.

It is found in the secreted. The protein localises to the host nucleus. In terms of biological role, secreted effector that acts as an elicitor that induces cell death in host plant cells. This Plasmopara viticola (Downy mildew of grapevine) protein is Secreted RxLR effector protein 24.